A 170-amino-acid polypeptide reads, in one-letter code: Adenine phosphoribosyltransferase (170 aa).

It belongs to the purine/pyrimidine phosphoribosyltransferase family. As to quaternary structure, homodimer.

It is found in the cytoplasm. The enzyme catalyses AMP + diphosphate = 5-phospho-alpha-D-ribose 1-diphosphate + adenine. It participates in purine metabolism; AMP biosynthesis via salvage pathway; AMP from adenine: step 1/1. Catalyzes a salvage reaction resulting in the formation of AMP, that is energically less costly than de novo synthesis. The sequence is that of Adenine phosphoribosyltransferase from Oceanobacillus iheyensis (strain DSM 14371 / CIP 107618 / JCM 11309 / KCTC 3954 / HTE831).